The primary structure comprises 516 residues: Probable inactive beta-glucosidase 14 (516 aa).

An N-terminal signal peptide occupies residues 1–23 (MAAAWLVVLLTVHRLLHLSGVSA). Residues Gln-43, His-145, and 190 to 191 (NQ) each bind a beta-D-glucoside. Residue Asn-193 is glycosylated (N-linked (GlcNAc...) asparagine). A disulfide bridge connects residues Cys-210 and Cys-217. Asn-221 and Asn-270 each carry an N-linked (GlcNAc...) asparagine glycan. Position 334 (Tyr-334) interacts with a beta-D-glucoside. Residues Cys-342 and Cys-347 are joined by a disulfide bond. Residue Glu-405 coordinates a beta-D-glucoside. Residue Glu-405 is the Nucleophile of the active site. Asn-415 and Asn-423 each carry an N-linked (GlcNAc...) asparagine glycan. A beta-D-glucoside contacts are provided by residues Trp-454, 461–462 (EW), and Phe-470.

This sequence belongs to the glycosyl hydrolase 1 family. As to expression, expressed in flowers and endosperm.

The chain is Probable inactive beta-glucosidase 14 from Oryza sativa subsp. japonica (Rice).